The following is a 283-amino-acid chain: 4-hydroxy-3-methylbut-2-enyl diphosphate reductase (283 aa).

Cys-12 provides a ligand contact to [4Fe-4S] cluster. (2E)-4-hydroxy-3-methylbut-2-enyl diphosphate is bound by residues His-40 and His-72. His-40 and His-72 together coordinate dimethylallyl diphosphate. His-40 and His-72 together coordinate isopentenyl diphosphate. Cys-94 is a [4Fe-4S] cluster binding site. His-122 serves as a coordination point for (2E)-4-hydroxy-3-methylbut-2-enyl diphosphate. Dimethylallyl diphosphate is bound at residue His-122. Isopentenyl diphosphate is bound at residue His-122. Catalysis depends on Glu-124, which acts as the Proton donor. Thr-160 contributes to the (2E)-4-hydroxy-3-methylbut-2-enyl diphosphate binding site. Position 188 (Cys-188) interacts with [4Fe-4S] cluster. (2E)-4-hydroxy-3-methylbut-2-enyl diphosphate-binding residues include Ser-216, Asn-218, and Ser-259. Dimethylallyl diphosphate is bound by residues Ser-216, Asn-218, and Ser-259. Residues Ser-216, Asn-218, and Ser-259 each coordinate isopentenyl diphosphate.

The protein belongs to the IspH family. [4Fe-4S] cluster is required as a cofactor.

It catalyses the reaction isopentenyl diphosphate + 2 oxidized [2Fe-2S]-[ferredoxin] + H2O = (2E)-4-hydroxy-3-methylbut-2-enyl diphosphate + 2 reduced [2Fe-2S]-[ferredoxin] + 2 H(+). The catalysed reaction is dimethylallyl diphosphate + 2 oxidized [2Fe-2S]-[ferredoxin] + H2O = (2E)-4-hydroxy-3-methylbut-2-enyl diphosphate + 2 reduced [2Fe-2S]-[ferredoxin] + 2 H(+). Its pathway is isoprenoid biosynthesis; dimethylallyl diphosphate biosynthesis; dimethylallyl diphosphate from (2E)-4-hydroxy-3-methylbutenyl diphosphate: step 1/1. It participates in isoprenoid biosynthesis; isopentenyl diphosphate biosynthesis via DXP pathway; isopentenyl diphosphate from 1-deoxy-D-xylulose 5-phosphate: step 6/6. Its function is as follows. Catalyzes the conversion of 1-hydroxy-2-methyl-2-(E)-butenyl 4-diphosphate (HMBPP) into a mixture of isopentenyl diphosphate (IPP) and dimethylallyl diphosphate (DMAPP). Acts in the terminal step of the DOXP/MEP pathway for isoprenoid precursor biosynthesis. This Dictyoglomus thermophilum (strain ATCC 35947 / DSM 3960 / H-6-12) protein is 4-hydroxy-3-methylbut-2-enyl diphosphate reductase.